A 468-amino-acid polypeptide reads, in one-letter code: Protein translocase subunit SecY (468 aa).

The Cytoplasmic segment spans residues 1–20 (MGARDVIYAMEKWFPEVERP). The chain crosses the membrane as a helical span at residues 21 to 47 (KKHVPLKEKFVWTGLALVLYYVLAEIP). Over 48–58 (VYGIPKKIQDY) the chain is Extracellular. An intramembrane region (helical) is located at residues 59-66 (FQFLRVVL). Residues 59-87 (FQFLRVVLAGRNGSILTLGIGPIVTAGII) traverse the membrane as a discontinuously helical segment. The stretch at 67-78 (AGRNGSILTLGI) is an intramembrane region. The helical intramembrane region spans 79–87 (GPIVTAGII). Topologically, residues 88–108 (LQLLVGSELIRLDLANPEDRR) are cytoplasmic. Residues 109 to 133 (FYQALQRVFSVFMCFFEAAIWVLGG) traverse the membrane as a helical segment. The Extracellular segment spans residues 134-144 (AFGRVGVDVTY). Residues 145-169 (TIATLMIIQLALGGIILIVLDELVS) form a helical membrane-spanning segment. Residues 170 to 175 (KWGIGS) lie on the Cytoplasmic side of the membrane. Residues 176 to 194 (GISLFIAAGVSQRILTRSL) traverse the membrane as a helical segment. Residues 195–239 (NPLTDPNIIDPLTGKPAIVGAIPYFIQHILDGDLKGALYRGGSAP) are Extracellular-facing. The chain crosses the membrane as a helical span at residues 240 to 261 (DMIAVTATIIVFLVVVYFESMR). Topologically, residues 262 to 285 (VEIPLGYRGVTIRGRYPIKFLYVS) are cytoplasmic. Residues 286–307 (NIPIILTFALYANIQLWARVLD) form a helical membrane-spanning segment. Residues 308–346 (RFGHPWLGRFDPVTGNPIGGFVLYVIPPRNIFTVIDNPV) are Extracellular-facing. A helical transmembrane segment spans residues 347–366 (RAIIYLILTIIFSLLFGFLW). At 367–409 (VELTGLDARTIARQLQRAGLQIPGFRRDPRTLERVLQKYIPYV) the chain is on the cytoplasmic side. The chain crosses the membrane as a helical span at residues 410–428 (TFWGSLTVALISVLADFLG). Topologically, residues 429–431 (ALG) are extracellular. Residues 432-446 (TGTGILLTVGILYRF) traverse the membrane as a helical segment. Topologically, residues 447 to 468 (YEEIAREQITEMFPALRRLFKG) are cytoplasmic.

Belongs to the SecY/SEC61-alpha family. In terms of assembly, component of the Sec protein translocase complex. Heterotrimer consisting of alpha (SecY), beta (SecG) and gamma (SecE) subunits. The heterotrimers can form oligomers, although 1 heterotrimer is thought to be able to translocate proteins. Interacts with the ribosome. May interact with SecDF, and other proteins may be involved.

Its subcellular location is the cell membrane. The central subunit of the protein translocation channel SecYEG. Consists of two halves formed by TMs 1-5 and 6-10. These two domains form a lateral gate at the front which open onto the bilayer between TMs 2 and 7, and are clamped together by SecE at the back. The channel is closed by both a pore ring composed of hydrophobic SecY resides and a short helix (helix 2A) on the extracellular side of the membrane which forms a plug. The plug probably moves laterally to allow the channel to open. The ring and the pore may move independently. The chain is Protein translocase subunit SecY from Pyrococcus horikoshii (strain ATCC 700860 / DSM 12428 / JCM 9974 / NBRC 100139 / OT-3).